The sequence spans 241 residues: Ribonuclease PH (241 aa).

Residues Arg-87 and Gly-125–Arg-127 each bind phosphate.

It belongs to the RNase PH family. In terms of assembly, homohexameric ring arranged as a trimer of dimers.

The catalysed reaction is tRNA(n+1) + phosphate = tRNA(n) + a ribonucleoside 5'-diphosphate. In terms of biological role, phosphorolytic 3'-5' exoribonuclease that plays an important role in tRNA 3'-end maturation. Removes nucleotide residues following the 3'-CCA terminus of tRNAs; can also add nucleotides to the ends of RNA molecules by using nucleoside diphosphates as substrates, but this may not be physiologically important. Probably plays a role in initiation of 16S rRNA degradation (leading to ribosome degradation) during starvation. This chain is Ribonuclease PH, found in Salinispora arenicola (strain CNS-205).